Consider the following 580-residue polypeptide: Formate--tetrahydrofolate ligase (580 aa).

ATP is bound at residue 65–72 (TPHGEGKT).

Belongs to the formate--tetrahydrofolate ligase family.

It catalyses the reaction (6S)-5,6,7,8-tetrahydrofolate + formate + ATP = (6R)-10-formyltetrahydrofolate + ADP + phosphate. It participates in one-carbon metabolism; tetrahydrofolate interconversion. The chain is Formate--tetrahydrofolate ligase from Shewanella baltica (strain OS223).